A 663-amino-acid chain; its full sequence is Bifunctional polymyxin resistance protein ArnA (663 aa).

Residues 1–307 (MSSKAVVFAY…ELGLVDGSVL (307 aa)) form a formyltransferase ArnAFT region. His-106 acts as the Proton donor; for formyltransferase activity in catalysis. (6R)-10-formyltetrahydrofolate is bound by residues Arg-116 and 138 to 142 (VKRAD). Residues 317-663 (RRTRVLILGV…EAMLEIADKK (347 aa)) are dehydrogenase ArnADH. Residues Asp-350 and 371-372 (DI) contribute to the NAD(+) site. UDP-alpha-D-glucuronate is bound by residues Ala-396, Tyr-401, and 435-436 (TS). The active-site Proton acceptor; for decarboxylase activity is Glu-437. Residues Arg-463, Asn-494, 528–537 (RLFDGGEQKR), and Tyr-615 each bind UDP-alpha-D-glucuronate. Arg-621 (proton donor; for decarboxylase activity) is an active-site residue.

This sequence in the N-terminal section; belongs to the Fmt family. UDP-L-Ara4N formyltransferase subfamily. It in the C-terminal section; belongs to the NAD(P)-dependent epimerase/dehydratase family. UDP-glucuronic acid decarboxylase subfamily. As to quaternary structure, homohexamer, formed by a dimer of trimers.

The catalysed reaction is UDP-alpha-D-glucuronate + NAD(+) = UDP-beta-L-threo-pentopyranos-4-ulose + CO2 + NADH. It catalyses the reaction UDP-4-amino-4-deoxy-beta-L-arabinose + (6R)-10-formyltetrahydrofolate = UDP-4-deoxy-4-formamido-beta-L-arabinose + (6S)-5,6,7,8-tetrahydrofolate + H(+). Its pathway is nucleotide-sugar biosynthesis; UDP-4-deoxy-4-formamido-beta-L-arabinose biosynthesis; UDP-4-deoxy-4-formamido-beta-L-arabinose from UDP-alpha-D-glucuronate: step 1/3. It participates in nucleotide-sugar biosynthesis; UDP-4-deoxy-4-formamido-beta-L-arabinose biosynthesis; UDP-4-deoxy-4-formamido-beta-L-arabinose from UDP-alpha-D-glucuronate: step 3/3. It functions in the pathway bacterial outer membrane biogenesis; lipopolysaccharide biosynthesis. Its function is as follows. Bifunctional enzyme that catalyzes the oxidative decarboxylation of UDP-glucuronic acid (UDP-GlcUA) to UDP-4-keto-arabinose (UDP-Ara4O) and the addition of a formyl group to UDP-4-amino-4-deoxy-L-arabinose (UDP-L-Ara4N) to form UDP-L-4-formamido-arabinose (UDP-L-Ara4FN). The modified arabinose is attached to lipid A and is required for resistance to polymyxin and cationic antimicrobial peptides. This chain is Bifunctional polymyxin resistance protein ArnA, found in Pseudomonas fluorescens (strain SBW25).